A 200-amino-acid chain; its full sequence is Pyridoxine/pyridoxamine 5'-phosphate oxidase (200 aa).

FMN contacts are provided by residues 48–53 (RMVLLK), 63–64 (YT), lysine 70, and glutamine 92. Lysine 53 is a substrate binding site. 3 residues coordinate substrate: tyrosine 110, arginine 114, and serine 118. FMN is bound by residues 127–128 (QS) and tryptophan 171. 177–179 (RLH) contacts substrate. Arginine 181 contacts FMN.

Belongs to the pyridoxamine 5'-phosphate oxidase family. In terms of assembly, homodimer. It depends on FMN as a cofactor.

It carries out the reaction pyridoxamine 5'-phosphate + O2 + H2O = pyridoxal 5'-phosphate + H2O2 + NH4(+). It catalyses the reaction pyridoxine 5'-phosphate + O2 = pyridoxal 5'-phosphate + H2O2. It participates in cofactor metabolism; pyridoxal 5'-phosphate salvage; pyridoxal 5'-phosphate from pyridoxamine 5'-phosphate: step 1/1. The protein operates within cofactor metabolism; pyridoxal 5'-phosphate salvage; pyridoxal 5'-phosphate from pyridoxine 5'-phosphate: step 1/1. Functionally, catalyzes the oxidation of either pyridoxine 5'-phosphate (PNP) or pyridoxamine 5'-phosphate (PMP) into pyridoxal 5'-phosphate (PLP). This Cereibacter sphaeroides (strain ATCC 17023 / DSM 158 / JCM 6121 / CCUG 31486 / LMG 2827 / NBRC 12203 / NCIMB 8253 / ATH 2.4.1.) (Rhodobacter sphaeroides) protein is Pyridoxine/pyridoxamine 5'-phosphate oxidase.